The chain runs to 366 residues: tRNA/tmRNA (uracil-C(5))-methyltransferase (366 aa).

Residues glutamine 190, tyrosine 218, asparagine 223, glutamate 239, and aspartate 299 each coordinate S-adenosyl-L-methionine. Cysteine 324 acts as the Nucleophile in catalysis. Glutamate 358 functions as the Proton acceptor in the catalytic mechanism.

It belongs to the class I-like SAM-binding methyltransferase superfamily. RNA M5U methyltransferase family. TrmA subfamily.

It carries out the reaction uridine(54) in tRNA + S-adenosyl-L-methionine = 5-methyluridine(54) in tRNA + S-adenosyl-L-homocysteine + H(+). It catalyses the reaction uridine(341) in tmRNA + S-adenosyl-L-methionine = 5-methyluridine(341) in tmRNA + S-adenosyl-L-homocysteine + H(+). Dual-specificity methyltransferase that catalyzes the formation of 5-methyluridine at position 54 (m5U54) in all tRNAs, and that of position 341 (m5U341) in tmRNA (transfer-mRNA). This Escherichia coli O157:H7 protein is tRNA/tmRNA (uracil-C(5))-methyltransferase.